We begin with the raw amino-acid sequence, 156 residues long: Transcriptional repressor NrdR (156 aa).

Residues 3–34 (CPFCGNIDTQVKDSRPAEDHVSIRRRRFCPAC) fold into a zinc finger. Positions 49–139 (LVVIKTSGKR…VYKNFQAADD (91 aa)) constitute an ATP-cone domain.

This sequence belongs to the NrdR family. Zn(2+) is required as a cofactor.

In terms of biological role, negatively regulates transcription of bacterial ribonucleotide reductase nrd genes and operons by binding to NrdR-boxes. This Ruegeria pomeroyi (strain ATCC 700808 / DSM 15171 / DSS-3) (Silicibacter pomeroyi) protein is Transcriptional repressor NrdR.